The primary structure comprises 1405 residues: DNA-directed RNA polymerase subunit beta' (1405 aa).

The Zn(2+) site is built by Cys-70, Cys-72, Cys-85, and Cys-88. Positions 460, 462, and 464 each coordinate Mg(2+). Residues Cys-814, Cys-888, Cys-895, and Cys-898 each contribute to the Zn(2+) site.

It belongs to the RNA polymerase beta' chain family. In terms of assembly, the RNAP catalytic core consists of 2 alpha, 1 beta, 1 beta' and 1 omega subunit. When a sigma factor is associated with the core the holoenzyme is formed, which can initiate transcription. Mg(2+) is required as a cofactor. It depends on Zn(2+) as a cofactor.

The catalysed reaction is RNA(n) + a ribonucleoside 5'-triphosphate = RNA(n+1) + diphosphate. Its function is as follows. DNA-dependent RNA polymerase catalyzes the transcription of DNA into RNA using the four ribonucleoside triphosphates as substrates. The chain is DNA-directed RNA polymerase subunit beta' from Shewanella oneidensis (strain ATCC 700550 / JCM 31522 / CIP 106686 / LMG 19005 / NCIMB 14063 / MR-1).